A 472-amino-acid polypeptide reads, in one-letter code: Nuclear receptor subfamily 0 group B member 1 (472 aa).

3 consecutive repeat copies span residues 1 to 67, 68 to 135, and 136 to 202. Residues 1-255 form a 4 X 67 AA tandem repeats region; it reads MAGEDHPWHG…RPIALKDPQV (255 aa). 3 consecutive short sequence motifs (LXXLL motif) follow at residues 13 to 17, 80 to 84, and 148 to 152; these read LYNLL, LYSML, and LYSLL. In terms of domain architecture, NR LBD spans 190–471; it reads QSTQAMAFLY…DMMLEMLCAK (282 aa). The 4; truncated repeat unit spans residues 203–255; that stretch reads VCCEEQPQQSSVASDTPVRADQTPAAPQEQPRAPWWDTSSGVQRPIALKDPQV. Disordered regions lie at residues 214–237 and 326–345; these read VASD…RAPW and RRQE…EQPQ. Positions 463 to 468 match the AF-2 motif motif; that stretch reads MMLEML.

The protein belongs to the nuclear hormone receptor family. NR0 subfamily. Homodimer. Interacts with NR5A1, NR5A2, NR0B2 and with COPS2. Interacts with ESRRB; represses ESRRB activity at the GATA6 promoter.

The protein resides in the nucleus. Its subcellular location is the cytoplasm. Nuclear receptor that lacks a DNA-binding domain and acts as a corepressor that inhibits the transcriptional activity of other nuclear receptors through heterodimeric interactions. Component of a cascade required for the development of the hypothalamic-pituitary-adrenal-gonadal axis. May also have a role in the development of the embryo and in the maintenance of embryonic stem cell pluripotency. This chain is Nuclear receptor subfamily 0 group B member 1 (Nr0b1), found in Rattus norvegicus (Rat).